A 247-amino-acid chain; its full sequence is uncharacterized protein (247 aa).

Positions 19, 38, 63, and 64 each coordinate NAD(+). Ser142 contacts substrate. NAD(+)-binding residues include Tyr155, Lys159, and Ser190. The Proton acceptor role is filled by Tyr155.

It belongs to the short-chain dehydrogenases/reductases (SDR) family.

This is an uncharacterized protein from Mycobacterium bovis (strain ATCC BAA-935 / AF2122/97).